Consider the following 60-residue polypeptide: Large ribosomal subunit protein bL32 (60 aa).

Residues Met1–Pro44 form a disordered region. Over residues Ser11 to Leu22 the composition is skewed to basic and acidic residues.

The protein belongs to the bacterial ribosomal protein bL32 family.

The sequence is that of Large ribosomal subunit protein bL32 from Pseudomonas putida (strain W619).